Consider the following 204-residue polypeptide: UPF0637 protein SAB0972c (204 aa).

The protein belongs to the UPF0637 family.

This chain is UPF0637 protein SAB0972c, found in Staphylococcus aureus (strain bovine RF122 / ET3-1).